Here is a 122-residue protein sequence, read N- to C-terminus: Large ribosomal subunit protein uL14 (122 aa).

This sequence belongs to the universal ribosomal protein uL14 family. Part of the 50S ribosomal subunit. Forms a cluster with proteins L3 and L19. In the 70S ribosome, L14 and L19 interact and together make contacts with the 16S rRNA in bridges B5 and B8.

In terms of biological role, binds to 23S rRNA. Forms part of two intersubunit bridges in the 70S ribosome. The protein is Large ribosomal subunit protein uL14 of Sulfurimonas denitrificans (strain ATCC 33889 / DSM 1251) (Thiomicrospira denitrificans (strain ATCC 33889 / DSM 1251)).